The chain runs to 745 residues: Bacteriophage N4 adsorption protein B (745 aa).

Transmembrane regions (helical) follow at residues 8–28 (FATWLYGLKVIAITLAVIMFI), 362–382 (ISNFVSFLAMLVMIQLLLLLA), and 393–413 (FLSIFSGSAWLMTLLWLNFGL).

Its subcellular location is the cell inner membrane. Its function is as follows. Required for bacteriophage N4 adsorption. May be a component of the phage receptor. The sequence is that of Bacteriophage N4 adsorption protein B (nfrB) from Escherichia coli O157:H7.